We begin with the raw amino-acid sequence, 298 residues long: Porphobilinogen deaminase (298 aa).

Position 239 is an S-(dipyrrolylmethanemethyl)cysteine (Cys239).

The protein belongs to the HMBS family. As to quaternary structure, monomer. Dipyrromethane serves as cofactor.

The catalysed reaction is 4 porphobilinogen + H2O = hydroxymethylbilane + 4 NH4(+). It functions in the pathway porphyrin-containing compound metabolism; protoporphyrin-IX biosynthesis; coproporphyrinogen-III from 5-aminolevulinate: step 2/4. Its function is as follows. Tetrapolymerization of the monopyrrole PBG into the hydroxymethylbilane pre-uroporphyrinogen in several discrete steps. The polypeptide is Porphobilinogen deaminase (Orientia tsutsugamushi (strain Boryong) (Rickettsia tsutsugamushi)).